The sequence spans 306 residues: Glutaminase (306 aa).

Substrate is bound by residues Ser-64, Asn-115, Glu-159, Asn-166, Tyr-190, Tyr-242, and Val-260.

Belongs to the glutaminase family. Homotetramer.

The enzyme catalyses L-glutamine + H2O = L-glutamate + NH4(+). The protein is Glutaminase of Photobacterium profundum (strain SS9).